The primary structure comprises 113 residues: U-scoloptoxin(16)-Sa1a (113 aa).

An N-terminal signal peptide occupies residues M1–A29.

It belongs to the scoloptoxin-16 family. Post-translationally, contains 4 disulfide bonds. In terms of tissue distribution, expressed by the venom gland.

It localises to the secreted. The chain is U-scoloptoxin(16)-Sa1a from Scolopendra alternans (Florida Keys giant centipede).